We begin with the raw amino-acid sequence, 102 residues long: Integration host factor subunit alpha (102 aa).

The protein belongs to the bacterial histone-like protein family. In terms of assembly, heterodimer of an alpha and a beta chain.

Its function is as follows. This protein is one of the two subunits of integration host factor, a specific DNA-binding protein that functions in genetic recombination as well as in transcriptional and translational control. The protein is Integration host factor subunit alpha of Chromohalobacter salexigens (strain ATCC BAA-138 / DSM 3043 / CIP 106854 / NCIMB 13768 / 1H11).